Here is a 616-residue protein sequence, read N- to C-terminus: Chaperone protein HscA (616 aa).

This sequence belongs to the heat shock protein 70 family.

Its function is as follows. Chaperone involved in the maturation of iron-sulfur cluster-containing proteins. Has a low intrinsic ATPase activity which is markedly stimulated by HscB. Involved in the maturation of IscU. The chain is Chaperone protein HscA from Shigella flexneri serotype 5b (strain 8401).